The sequence spans 180 residues: 5'(3')-deoxyribonucleotidase (180 aa).

Asp-9 serves as the catalytic Nucleophile. 3 residues coordinate Mg(2+): Asp-9, Asp-11, and Asp-134. The Proton donor role is filled by Asp-11.

It belongs to the 5'(3')-deoxyribonucleotidase family. The cofactor is Mg(2+).

Its function is as follows. Dephosphorylates nucleoside monophosphates such as the 5' and 2'(3')-phosphates of deoxyribonucleotides in vitro. This Clostridium acetobutylicum (strain ATCC 824 / DSM 792 / JCM 1419 / IAM 19013 / LMG 5710 / NBRC 13948 / NRRL B-527 / VKM B-1787 / 2291 / W) protein is 5'(3')-deoxyribonucleotidase.